Reading from the N-terminus, the 598-residue chain is DNA polymerase alpha subunit B (598 aa).

Residues 112–140 (SYTTPSKGSQKRAISTPETPLTKRSVSTR) are compositionally biased toward polar residues. The tract at residues 112–167 (SYTTPSKGSQKRAISTPETPLTKRSVSTRSPHQLLSPSSFSPSATPSQKYNSRSNR) is disordered. Serine 126 is modified (phosphoserine). Threonine 127 and threonine 130 each carry phosphothreonine. Residues serine 141, serine 147, serine 152, and serine 154 each carry the phosphoserine modification. Residues 141–158 (SPHQLLSPSSFSPSATPS) show a composition bias toward low complexity.

This sequence belongs to the DNA polymerase alpha subunit B family. As to quaternary structure, component of the alpha DNA polymerase complex (also known as the alpha DNA polymerase-primase complex) consisting of four subunits: the catalytic subunit POLA1, the regulatory subunit POLA2, and primase complex subunits PRIM1 and PRIM2 respectively. Within the complex, POLA1 directly interacts with PRIM2/p58. Phosphorylated in a cell cycle-dependent manner, in G2/M phase.

It is found in the nucleus. Functionally, accessory subunit of the DNA polymerase alpha complex (also known as the alpha DNA polymerase-primase complex) which plays an essential role in the initiation of DNA synthesis. During the S phase of the cell cycle, the DNA polymerase alpha complex (composed of a catalytic subunit POLA1, an accessory subunit POLA2 and two primase subunits, the catalytic subunit PRIM1 and the regulatory subunit PRIM2) is recruited to DNA at the replicative forks via direct interactions with MCM10 and WDHD1. The primase subunit of the polymerase alpha complex initiates DNA synthesis by oligomerising short RNA primers on both leading and lagging strands. These primers are initially extended by the polymerase alpha catalytic subunit and subsequently transferred to polymerase delta and polymerase epsilon for processive synthesis on the lagging and leading strand, respectively. The chain is DNA polymerase alpha subunit B (POLA2) from Homo sapiens (Human).